The primary structure comprises 206 residues: Large ribosomal subunit protein uL4 (206 aa).

Belongs to the universal ribosomal protein uL4 family. As to quaternary structure, part of the 50S ribosomal subunit.

One of the primary rRNA binding proteins, this protein initially binds near the 5'-end of the 23S rRNA. It is important during the early stages of 50S assembly. It makes multiple contacts with different domains of the 23S rRNA in the assembled 50S subunit and ribosome. In terms of biological role, forms part of the polypeptide exit tunnel. In Desulfatibacillum aliphaticivorans, this protein is Large ribosomal subunit protein uL4.